Consider the following 183-residue polypeptide: Adenine phosphoribosyltransferase (183 aa).

Belongs to the purine/pyrimidine phosphoribosyltransferase family. As to quaternary structure, homodimer.

The protein resides in the cytoplasm. It catalyses the reaction AMP + diphosphate = 5-phospho-alpha-D-ribose 1-diphosphate + adenine. Its pathway is purine metabolism; AMP biosynthesis via salvage pathway; AMP from adenine: step 1/1. Its function is as follows. Catalyzes a salvage reaction resulting in the formation of AMP, that is energically less costly than de novo synthesis. The polypeptide is Adenine phosphoribosyltransferase (Salmonella heidelberg (strain SL476)).